The following is a 435-amino-acid chain: N-lysine methyltransferase SMYD2-A (435 aa).

The SET domain maps to 7–241 (EGTERFLSPG…PEEEIFNSYI (235 aa)). Residue 17-19 (KGR) participates in S-adenosyl-L-methionine binding. Zn(2+) is bound by residues cysteine 52, cysteine 55, cysteine 65, cysteine 68, cysteine 74, cysteine 78, histidine 86, and cysteine 90. An MYND-type zinc finger spans residues 52–90 (CECCFTRKEGLSKCGKCKQAYYCNVECQRGDWPMHKLEC). S-adenosyl-L-methionine contacts are provided by residues histidine 137, 206 to 207 (NH), and 258 to 260 (YFF).

It belongs to the class V-like SAM-binding methyltransferase superfamily.

Its subcellular location is the cytoplasm. It localises to the cytosol. It is found in the nucleus. The catalysed reaction is L-lysyl(4)-[histone H3] + 3 S-adenosyl-L-methionine = N(6),N(6),N(6)-trimethyl-L-lysyl(4)-[histone H3] + 3 S-adenosyl-L-homocysteine + 3 H(+). It carries out the reaction L-lysyl-[protein] + S-adenosyl-L-methionine = N(6)-methyl-L-lysyl-[protein] + S-adenosyl-L-homocysteine + H(+). Functionally, protein-lysine N-methyltransferase that methylates both histones and non-histone proteins, including p53/TP53 and RB1. Specifically trimethylates histone H3 'Lys-4' (H3K4me3) in vivo. The activity requires interaction with HSP90alpha. Shows even higher methyltransferase activity on p53/TP53. Monomethylates 'Lys-370' of p53/TP53, leading to decreased DNA-binding activity and subsequent transcriptional regulation activity of p53/TP53. Monomethylates RB1 at 'Lys-860'. The sequence is that of N-lysine methyltransferase SMYD2-A (smyd2a) from Danio rerio (Zebrafish).